The sequence spans 130 residues: MYEHESCGVRISVSPDYLEDESTPEEGRFVWAYTIEIENTGKQPVQLIARKWMITDANGRTEHVQGMGVIGEQPVIEPGGRFRYTSGAPLPTPSGFMSGSYEMRRGDGESFAATIPDFSLDRPSDRLWLH.

Residues 3-127 (EHESCGVRIS…FSLDRPSDRL (125 aa)) enclose the ApaG domain.

In Maricaulis maris (strain MCS10) (Caulobacter maris), this protein is Protein ApaG.